The sequence spans 211 residues: LexA repressor (211 aa).

A DNA-binding region (H-T-H motif) is located at residues 27–47 (QTEIARAFGFKGVRAAQYHLE). Active-site for autocatalytic cleavage activity residues include Ser-131 and Lys-168.

It belongs to the peptidase S24 family. As to quaternary structure, homodimer.

It carries out the reaction Hydrolysis of Ala-|-Gly bond in repressor LexA.. Its function is as follows. Represses a number of genes involved in the response to DNA damage (SOS response), including recA and lexA. In the presence of single-stranded DNA, RecA interacts with LexA causing an autocatalytic cleavage which disrupts the DNA-binding part of LexA, leading to derepression of the SOS regulon and eventually DNA repair. In Stenotrophomonas maltophilia (strain R551-3), this protein is LexA repressor.